The primary structure comprises 286 residues: Haloalkane dehalogenase 2 (286 aa).

The region spanning Pro35–Thr134 is the AB hydrolase-1 domain. The active-site Nucleophile is the Asp109. Residue Asp238 is the Proton donor of the active site. The active-site Proton acceptor is His267.

Belongs to the haloalkane dehalogenase family. Type 1 subfamily. Monomer.

It carries out the reaction 1-haloalkane + H2O = a halide anion + a primary alcohol + H(+). Its function is as follows. Catalyzes hydrolytic cleavage of carbon-halogen bonds in halogenated aliphatic compounds, leading to the formation of the corresponding primary alcohols, halide ions and protons. This Mycobacterium bovis (strain ATCC BAA-935 / AF2122/97) protein is Haloalkane dehalogenase 2 (dhmA2).